The primary structure comprises 350 residues: Uroporphyrinogen decarboxylase (350 aa).

Substrate contacts are provided by residues 28–32, aspartate 78, tyrosine 155, serine 210, and histidine 325; that span reads RQAGR.

This sequence belongs to the uroporphyrinogen decarboxylase family. In terms of assembly, homodimer.

It is found in the cytoplasm. The enzyme catalyses uroporphyrinogen III + 4 H(+) = coproporphyrinogen III + 4 CO2. The protein operates within porphyrin-containing compound metabolism; protoporphyrin-IX biosynthesis; coproporphyrinogen-III from 5-aminolevulinate: step 4/4. Functionally, catalyzes the decarboxylation of four acetate groups of uroporphyrinogen-III to yield coproporphyrinogen-III. The chain is Uroporphyrinogen decarboxylase from Trichormus variabilis (strain ATCC 29413 / PCC 7937) (Anabaena variabilis).